The following is a 221-amino-acid chain: Cytidylate kinase (221 aa).

Gly11–Thr19 lines the ATP pocket.

The protein belongs to the cytidylate kinase family. Type 1 subfamily.

It localises to the cytoplasm. It catalyses the reaction CMP + ATP = CDP + ADP. The enzyme catalyses dCMP + ATP = dCDP + ADP. This Cupriavidus pinatubonensis (strain JMP 134 / LMG 1197) (Cupriavidus necator (strain JMP 134)) protein is Cytidylate kinase.